Reading from the N-terminus, the 390-residue chain is Succinate--CoA ligase [ADP-forming] subunit beta (390 aa).

The 240-residue stretch at 9 to 248 folds into the ATP-grasp domain; sequence KDILRKFGVT…TSEEDPFEVE (240 aa). ATP contacts are provided by residues Lys-50, 57 to 59, Glu-103, Met-106, and Glu-111; that span reads GRG. The Mg(2+) site is built by Asn-203 and Asp-217. Substrate is bound by residues Asn-268 and 325–327; that span reads GIV.

Belongs to the succinate/malate CoA ligase beta subunit family. In terms of assembly, heterotetramer of two alpha and two beta subunits. The cofactor is Mg(2+).

It carries out the reaction succinate + ATP + CoA = succinyl-CoA + ADP + phosphate. It catalyses the reaction GTP + succinate + CoA = succinyl-CoA + GDP + phosphate. Its pathway is carbohydrate metabolism; tricarboxylic acid cycle; succinate from succinyl-CoA (ligase route): step 1/1. Functionally, succinyl-CoA synthetase functions in the citric acid cycle (TCA), coupling the hydrolysis of succinyl-CoA to the synthesis of either ATP or GTP and thus represents the only step of substrate-level phosphorylation in the TCA. The beta subunit provides nucleotide specificity of the enzyme and binds the substrate succinate, while the binding sites for coenzyme A and phosphate are found in the alpha subunit. The sequence is that of Succinate--CoA ligase [ADP-forming] subunit beta from Chlorobium chlorochromatii (strain CaD3).